A 347-amino-acid polypeptide reads, in one-letter code: DnaJ protein ERDJ3B (347 aa).

The signal sequence occupies residues 1–23 (MAAPRWIGPLLLLLLHFVAAVAG). One can recognise a J domain in the interval 25–90 (SYYDVLQVPK…EKRKIYDRYG (66 aa)).

As to quaternary structure, interacts with BIP1.

The protein localises to the endoplasmic reticulum. Functionally, may play a role in protein folding in the endoplasmic reticulum. The protein is DnaJ protein ERDJ3B of Oryza sativa subsp. japonica (Rice).